We begin with the raw amino-acid sequence, 528 residues long: MSTVNVQIGLHELLNGSNAQIQLSVPQLVEKVLMRNEGKLTSTGAVSASTGKYTGRSPKDKFIVKEASVADKIAWGAVNQPISEEHFNKLYTKVLEYLKEKEELFVFKGFAGADRNYRLPIQVINEYAWHNLFVHQLFIRPTEEELTTHESEFTIVSAPNFKADPAVDGTNSEAFIMVSFEKRIVLIGGTEYAGEMKKSIFSIMNFLLPEQDILSMHCSANVGEEGDVALFFGLSGTGKTTLSADPNRKLIGDDEHGWSDNGVFNIEGGCYAKCVNLSHEKEPQIFDAITFGSVLENVIINDQTRIADYNDTTLTENTRAAYPMHAIDNIVLPSVAGHPNTIIFLTADASGVLPPISKLSKEQAMYHFLSGYTSKLAGTERGVTSPQATFSTCFGSPFLPLDASRYAEMLGEKIEKHDAKVFLVNTGWTGGEYGVGKRMNLGYTRAMIQAALNGELAKTETAKHDIFGLEVPLHVPGVPDEVLMPEQTWADKAAYKAKAIELANEFKANFKKFDSVSEDIINLGGPIA.

Substrate contacts are provided by Arg56, Tyr192, and Lys198. ATP is bound by residues Lys198, His217, and 233 to 241 (GLSGTGKTT). Lys198 and His217 together coordinate Mn(2+). Asp254 lines the Mn(2+) pocket. Residues Glu282, Arg319, and Thr444 each contribute to the ATP site. Arg319 lines the substrate pocket.

This sequence belongs to the phosphoenolpyruvate carboxykinase (ATP) family. Requires Mn(2+) as cofactor.

The protein resides in the cytoplasm. The enzyme catalyses oxaloacetate + ATP = phosphoenolpyruvate + ADP + CO2. It functions in the pathway carbohydrate biosynthesis; gluconeogenesis. In terms of biological role, involved in the gluconeogenesis. Catalyzes the conversion of oxaloacetate (OAA) to phosphoenolpyruvate (PEP) through direct phosphoryl transfer between the nucleoside triphosphate and OAA. This is Phosphoenolpyruvate carboxykinase (ATP) from Bacillus cereus (strain 03BB102).